The sequence spans 223 residues: Ribose-5-phosphate isomerase A (223 aa).

Substrate is bound by residues 26–29, 82–85, and 95–98; these read TGST, DGAD, and KGGG. Glu-104 functions as the Proton acceptor in the catalytic mechanism. Lys-122 contacts substrate.

The protein belongs to the ribose 5-phosphate isomerase family. In terms of assembly, homodimer.

It catalyses the reaction aldehydo-D-ribose 5-phosphate = D-ribulose 5-phosphate. Its pathway is carbohydrate degradation; pentose phosphate pathway; D-ribose 5-phosphate from D-ribulose 5-phosphate (non-oxidative stage): step 1/1. Its function is as follows. Catalyzes the reversible conversion of ribose-5-phosphate to ribulose 5-phosphate. This chain is Ribose-5-phosphate isomerase A, found in Streptococcus agalactiae serotype III (strain NEM316).